The primary structure comprises 519 residues: O-fucosyltransferase 1 (519 aa).

The Cytoplasmic portion of the chain corresponds to 1 to 24 (MRRLGHHRLHGKTGGVGTKGMVAK). A helical; Signal-anchor for type II membrane protein membrane pass occupies residues 25–45 (LSIGVIVLLICTLSLLFSANI). The Lumenal segment spans residues 46 to 519 (GSNREPTRPS…TNSTVTGLER (474 aa)). A disordered region spans residues 67-86 (KSGGWRPSSAPRSDWPPPTK). An N-linked (GlcNAc...) asparagine glycan is attached at N118. 260 to 262 (HLR) provides a ligand contact to substrate. 3 N-linked (GlcNAc...) asparagine glycosylation sites follow: N327, N357, and N511. Residues 497 to 519 (RLESIRDPDSTSQTNSTVTGLER) form a disordered region. The span at 506–519 (STSQTNSTVTGLER) shows a compositional bias: polar residues.

Belongs to the glycosyltransferase GT106 family.

It localises to the golgi apparatus membrane. The protein operates within glycan metabolism. This chain is O-fucosyltransferase 1, found in Arabidopsis thaliana (Mouse-ear cress).